Reading from the N-terminus, the 293-residue chain is Movement protein BC1 (293 aa).

The protein belongs to the begomovirus movement protein BC1 family. Binds to dimeric supercoiled plasmid DNA. In terms of processing, phosphorylated.

It is found in the host cell membrane. Its subcellular location is the host microsome membrane. It localises to the host endoplasmic reticulum membrane. Its function is as follows. Transports viral genome to neighboring plant cells directly through plasmosdesmata, without any budding. The movement protein allows efficient cell to cell propagation, by bypassing the host cell wall barrier. Begomovirus genome is shuttled out of nucleus by Nuclear shuttle protein (NSP) and the movement protein transports the DNA-NSP complex to cell plasmodesmata and facilitates further movement across the cell wall. The polypeptide is Movement protein BC1 (Macroptilium lathyroides (Lima bean)).